A 670-amino-acid chain; its full sequence is DNA ligase (670 aa).

NAD(+) is bound by residues 33-37 (DAEFD), 82-83 (SL), and E113. K115 acts as the N6-AMP-lysine intermediate in catalysis. NAD(+)-binding residues include R136, E170, K285, and K309. Zn(2+) is bound by residues C403, C406, C421, and C427. Residues 587 to 670 (EQNLYLSGKT…EVLKAGDNNG (84 aa)) enclose the BRCT domain.

It belongs to the NAD-dependent DNA ligase family. LigA subfamily. Requires Mg(2+) as cofactor. Mn(2+) is required as a cofactor.

It carries out the reaction NAD(+) + (deoxyribonucleotide)n-3'-hydroxyl + 5'-phospho-(deoxyribonucleotide)m = (deoxyribonucleotide)n+m + AMP + beta-nicotinamide D-nucleotide.. DNA ligase that catalyzes the formation of phosphodiester linkages between 5'-phosphoryl and 3'-hydroxyl groups in double-stranded DNA using NAD as a coenzyme and as the energy source for the reaction. It is essential for DNA replication and repair of damaged DNA. This Halothermothrix orenii (strain H 168 / OCM 544 / DSM 9562) protein is DNA ligase.